The following is a 283-amino-acid chain: ATP phosphoribosyltransferase (283 aa).

Belongs to the ATP phosphoribosyltransferase family. Long subfamily. Requires Mg(2+) as cofactor.

It localises to the cytoplasm. It carries out the reaction 1-(5-phospho-beta-D-ribosyl)-ATP + diphosphate = 5-phospho-alpha-D-ribose 1-diphosphate + ATP. The protein operates within amino-acid biosynthesis; L-histidine biosynthesis; L-histidine from 5-phospho-alpha-D-ribose 1-diphosphate: step 1/9. Its activity is regulated as follows. Feedback inhibited by histidine. Catalyzes the condensation of ATP and 5-phosphoribose 1-diphosphate to form N'-(5'-phosphoribosyl)-ATP (PR-ATP). Has a crucial role in the pathway because the rate of histidine biosynthesis seems to be controlled primarily by regulation of HisG enzymatic activity. The sequence is that of ATP phosphoribosyltransferase from Rhodococcus jostii (strain RHA1).